The following is a 280-amino-acid chain: DNA repair protein RecO (280 aa).

The segment at 261–280 is disordered; the sequence is DMAHGNHTGQEDLPATASGA.

It belongs to the RecO family.

In terms of biological role, involved in DNA repair and RecF pathway recombination. This is DNA repair protein RecO from Mycolicibacterium smegmatis (strain ATCC 700084 / mc(2)155) (Mycobacterium smegmatis).